The primary structure comprises 435 residues: MFESLWLQLQHPNTQWVLAGTLLLGTASGVLGSFVLLRKQSLIGDAMAHSALPGVCLAFLFTGQKSLPFFLLGAALAGLLGTFCIQLIPRLSKTKEDSAIGIVLSVFFGVGIILLTYIQQQGAGSQSGLDSFLFGQAASLVRQDIILIAGISAVLLLLCIVFFKEFTLITFDLAFAKGLGIPVRFLNGLLACLIVCAVVIGLQTVGVILMAAMLITPAITARYWTERLTGMIIIAGITGGVSGVAGTLLSTTMKGMATGPLMILSATLLFLFSMICAPKRGLAAKAIRLMRLRRRTSREQVLLAIYEQYEKNNLCVTVESVRKKRRLSPSLCLKALNDLEQERCIERIENGIWQITSKGIEKGYHTALKQRMYEVYLMHEMELANIESDQDYFDPDRLPRETRERLYSLLKLYGRMPERRKASHDAEKGQIANEF.

9 helical membrane-spanning segments follow: residues V17–L37, L42–T62, P68–I88, S98–I118, Q143–F163, F166–L186, L189–L209, L228–L248, and G255–I275.

This sequence belongs to the ABC-3 integral membrane protein family. The complex is probably composed of two ATP-binding proteins (MntB), two transmembrane proteins (MntC and MntD) and a solute-binding protein (MntA).

The protein resides in the cell membrane. Its function is as follows. Probably part of the ABC transporter complex MntABCD involved in manganese import. Probably responsible for the translocation of the substrate across the membrane. The sequence is that of Manganese transport system membrane protein MntC from Bacillus subtilis (strain 168).